We begin with the raw amino-acid sequence, 623 residues long: Sodium-coupled monocarboxylate transporter 2 (623 aa).

Residues 1–10 (METVGRFQAG) are Extracellular-facing. Residues 11-31 (DYVVFACLFVVSSGIGVFFAI) traverse the membrane as a helical segment. The Cytoplasmic segment spans residues 32-50 (KERNKAPSKEFLVGGRQMS). A helical transmembrane segment spans residues 51–71 (CGPVALSLTASFMSAVTVIGA). Residues 72 to 83 (PADVYRFGASYV) are Extracellular-facing. The chain crosses the membrane as a helical span at residues 84 to 104 (IFGVAYTFVVFFTAELFLPVF). Residues 105–129 (YRSGITSTYEYLELRFCKLVRVAAT) are Cytoplasmic-facing. A helical transmembrane segment spans residues 130-150 (LIYIIQTILYTGVVVYAPALA). At 151–158 (LNQVTGFD) the chain is on the extracellular side. Residues 159–179 (LWGSIFATGIVCTFYCTLGGL) form a helical membrane-spanning segment. At 180–181 (KA) the chain is on the cytoplasmic side. Residues 182-202 (VVWTDAFQMVVMVVGFLTVLI) traverse the membrane as a helical segment. Residues 203 to 236 (QGSSRAGGIENVWSTSRTGGRLQVFDFDVSPLRR) are Extracellular-facing. Residues 237–257 (HTFWTLSVGGTFTWLGIYGVN) traverse the membrane as a helical segment. At 258–276 (QSTIQRCISCKTEGHARWA) the chain is on the cytoplasmic side. Residues 277–297 (LYLNLLGLWIILFCAVVSGLI) traverse the membrane as a helical segment. Over 298–322 (MYSYYSHCDPWSSGLISAPDQLMPY) the chain is Extracellular. The helical transmembrane segment at 323–343 (FVMEILGAFPGLPGLFVACAF) threads the bilayer. At 344–386 (SGTLSTVAASINALATVMYEDFVSQCFPDLSNRAASWISKALC) the chain is on the cytoplasmic side. Residues 387–407 (VAFGVACTTMAVAASYMGGIV) form a helical membrane-spanning segment. Over 408 to 412 (QAALS) the chain is Extracellular. The chain crosses the membrane as a helical span at residues 413–433 (IHGMCGGPVLGLFSLGILFPF). The Cytoplasmic portion of the chain corresponds to 434 to 438 (TNLKG). A helical membrane pass occupies residues 439-459 (AVGGLIVGISLSFWVGVGAFI). Residues 460–510 (YPAPSNNTHALELNTAGCNITAAAFEPTSATVTQLTSDRNWLADSWYSMSY) lie on the Extracellular side of the membrane. N465 and N478 each carry an N-linked (GlcNAc...) asparagine glycan. A helical membrane pass occupies residues 511–531 (LYYSAVGFIGTVAAGLLITLL). Residues 532 to 623 (TGPMDPKLLK…NETSIVQKKL (92 aa)) lie on the Cytoplasmic side of the membrane.

This sequence belongs to the sodium:solute symporter (SSF) (TC 2.A.21) family.

The protein resides in the apical cell membrane. It catalyses the reaction (S)-lactate(out) + Na(+)(out) = (S)-lactate(in) + Na(+)(in). It carries out the reaction nicotinate(out) + Na(+)(out) = nicotinate(in) + Na(+)(in). The enzyme catalyses pyruvate(out) + Na(+)(out) = pyruvate(in) + Na(+)(in). The catalysed reaction is propanoate(out) + Na(+)(out) = propanoate(in) + Na(+)(in). It catalyses the reaction butanoate(out) + Na(+)(out) = butanoate(in) + Na(+)(in). It carries out the reaction acetoacetate(out) + Na(+)(out) = acetoacetate(in) + Na(+)(in). Its function is as follows. Acts as an electroneutral and low-affinity sodium (Na(+))-dependent sodium-coupled solute transporter. Catalyzes the transport across the plasma membrane of many monocarboxylates such as lactate, pyruvate, nicotinate, propionate, butyrate and beta-D-hydroxybutyrate. This chain is Sodium-coupled monocarboxylate transporter 2 (slc5a12), found in Danio rerio (Zebrafish).